Reading from the N-terminus, the 211-residue chain is Uracil phosphoribosyltransferase (211 aa).

5-phospho-alpha-D-ribose 1-diphosphate contacts are provided by residues Arg79, Arg104, and 131-139 (DPMLATGGS). Residues Ile196 and 201–203 (GDA) each bind uracil. Asp202 contributes to the 5-phospho-alpha-D-ribose 1-diphosphate binding site.

It belongs to the UPRTase family. The cofactor is Mg(2+).

It carries out the reaction UMP + diphosphate = 5-phospho-alpha-D-ribose 1-diphosphate + uracil. Its pathway is pyrimidine metabolism; UMP biosynthesis via salvage pathway; UMP from uracil: step 1/1. Its activity is regulated as follows. Allosterically activated by GTP. In terms of biological role, catalyzes the conversion of uracil and 5-phospho-alpha-D-ribose 1-diphosphate (PRPP) to UMP and diphosphate. The polypeptide is Uracil phosphoribosyltransferase (Limosilactobacillus reuteri (strain DSM 20016) (Lactobacillus reuteri)).